Reading from the N-terminus, the 297-residue chain is 4-hydroxy-tetrahydrodipicolinate synthase (297 aa).

Thr-55 is a pyruvate binding site. Tyr-144 acts as the Proton donor/acceptor in catalysis. The active-site Schiff-base intermediate with substrate is Lys-172. Ile-213 contacts pyruvate.

The protein belongs to the DapA family. Homotetramer; dimer of dimers.

It localises to the cytoplasm. It carries out the reaction L-aspartate 4-semialdehyde + pyruvate = (2S,4S)-4-hydroxy-2,3,4,5-tetrahydrodipicolinate + H2O + H(+). The protein operates within amino-acid biosynthesis; L-lysine biosynthesis via DAP pathway; (S)-tetrahydrodipicolinate from L-aspartate: step 3/4. Catalyzes the condensation of (S)-aspartate-beta-semialdehyde [(S)-ASA] and pyruvate to 4-hydroxy-tetrahydrodipicolinate (HTPA). The protein is 4-hydroxy-tetrahydrodipicolinate synthase of Lactococcus lactis subsp. cremoris (strain SK11).